The following is a 228-amino-acid chain: Ankyrin repeat domain-containing protein 46 (228 aa).

4 ANK repeats span residues 11–40 (QTNV…DPNI), 44–74 (RGRT…PLAT), 77–103 (QGNT…KIDI), and 107–138 (QGAT…EVKG). The chain crosses the membrane as a helical span at residues 195-215 (VLLLILVIALLSLGIAYYVSG).

The protein resides in the membrane. The chain is Ankyrin repeat domain-containing protein 46 (Ankrd46) from Rattus norvegicus (Rat).